The sequence spans 332 residues: Anthranilate phosphoribosyltransferase (332 aa).

5-phospho-alpha-D-ribose 1-diphosphate contacts are provided by residues Gly-79, 82–83 (GD), Thr-87, 89–92 (NIST), 107–115 (KHGNRSVSS), and Ser-119. Gly-79 is an anthranilate binding site. Ser-91 contributes to the Mg(2+) binding site. Asn-110 provides a ligand contact to anthranilate. Residue Arg-165 participates in anthranilate binding. 2 residues coordinate Mg(2+): Asp-223 and Glu-224.

This sequence belongs to the anthranilate phosphoribosyltransferase family. Homodimer. It depends on Mg(2+) as a cofactor.

It carries out the reaction N-(5-phospho-beta-D-ribosyl)anthranilate + diphosphate = 5-phospho-alpha-D-ribose 1-diphosphate + anthranilate. Its pathway is amino-acid biosynthesis; L-tryptophan biosynthesis; L-tryptophan from chorismate: step 2/5. Its function is as follows. Catalyzes the transfer of the phosphoribosyl group of 5-phosphorylribose-1-pyrophosphate (PRPP) to anthranilate to yield N-(5'-phosphoribosyl)-anthranilate (PRA). In Vibrio vulnificus (strain YJ016), this protein is Anthranilate phosphoribosyltransferase.